The primary structure comprises 596 residues: Chaperone protein DnaK (596 aa).

A Phosphothreonine; by autocatalysis modification is found at Thr180.

This sequence belongs to the heat shock protein 70 family.

Acts as a chaperone. In Thermosipho melanesiensis (strain DSM 12029 / CIP 104789 / BI429), this protein is Chaperone protein DnaK.